A 289-amino-acid polypeptide reads, in one-letter code: Aquaporin-2 (289 aa).

The segment at methionine 1–arginine 36 is disordered. At methionine 1–histidine 47 the chain is on the cytoplasmic side. Residues phenylalanine 48–isoleucine 68 form a helical membrane-spanning segment. The Extracellular portion of the chain corresponds to cysteine 69 to leucine 90. A helical transmembrane segment spans residues isoleucine 91 to valine 111. The Cytoplasmic segment spans residues serine 112–cysteine 135. The NPA 1 motif lies at asparagine 117–alanine 119. The helical transmembrane segment at valine 136–methionine 156 threads the bilayer. The Extracellular segment spans residues threonine 157–arginine 175. The chain crosses the membrane as a helical span at residues glycine 176–valine 196. Topologically, residues glutamate 197–asparagine 202 are cytoplasmic. A helical transmembrane segment spans residues phenylalanine 203 to tyrosine 223. Residues threonine 224–histidine 247 lie on the Extracellular side of the membrane. Residues asparagine 229–alanine 231 carry the NPA 2 motif. Residues tryptophan 248 to leucine 268 form a helical membrane-spanning segment. Over glutamine 269–aspartate 289 the chain is Cytoplasmic.

The protein belongs to the MIP/aquaporin (TC 1.A.8) family.

The protein resides in the endoplasmic reticulum membrane. Its subcellular location is the cell membrane. Functionally, water channel required to facilitate the transport of water across membranes. Involved in freeze tolerance, osmotolerance and cell flocculation in liquid cultures. Is non-functional in most laboratory strains. This is Aquaporin-2 (AQY2) from Saccharomyces cerevisiae (Baker's yeast).